We begin with the raw amino-acid sequence, 439 residues long: tRNA-2-methylthio-N(6)-dimethylallyladenosine synthase (439 aa).

Residues K2–Q119 enclose the MTTase N-terminal domain. C11, C48, C82, C156, C160, and C163 together coordinate [4Fe-4S] cluster. One can recognise a Radical SAM core domain in the interval R142–E374. The TRAM domain maps to Q377–C439.

This sequence belongs to the methylthiotransferase family. MiaB subfamily. In terms of assembly, monomer. Requires [4Fe-4S] cluster as cofactor.

The protein localises to the cytoplasm. It carries out the reaction N(6)-dimethylallyladenosine(37) in tRNA + (sulfur carrier)-SH + AH2 + 2 S-adenosyl-L-methionine = 2-methylsulfanyl-N(6)-dimethylallyladenosine(37) in tRNA + (sulfur carrier)-H + 5'-deoxyadenosine + L-methionine + A + S-adenosyl-L-homocysteine + 2 H(+). Catalyzes the methylthiolation of N6-(dimethylallyl)adenosine (i(6)A), leading to the formation of 2-methylthio-N6-(dimethylallyl)adenosine (ms(2)i(6)A) at position 37 in tRNAs that read codons beginning with uridine. The polypeptide is tRNA-2-methylthio-N(6)-dimethylallyladenosine synthase (Coxiella burnetii (strain Dugway 5J108-111)).